The chain runs to 204 residues: Small ribosomal subunit protein eS8 (204 aa).

This sequence belongs to the eukaryotic ribosomal protein eS8 family.

In Griffithsia japonica (Red alga), this protein is Small ribosomal subunit protein eS8 (RPS8).